The following is a 357-amino-acid chain: Phenylalanine--tRNA ligase alpha subunit (357 aa).

Glu278 provides a ligand contact to Mg(2+).

This sequence belongs to the class-II aminoacyl-tRNA synthetase family. Phe-tRNA synthetase alpha subunit type 1 subfamily. In terms of assembly, tetramer of two alpha and two beta subunits. The cofactor is Mg(2+).

It is found in the cytoplasm. The enzyme catalyses tRNA(Phe) + L-phenylalanine + ATP = L-phenylalanyl-tRNA(Phe) + AMP + diphosphate + H(+). This chain is Phenylalanine--tRNA ligase alpha subunit, found in Albidiferax ferrireducens (strain ATCC BAA-621 / DSM 15236 / T118) (Rhodoferax ferrireducens).